Reading from the N-terminus, the 425-residue chain is MFENLCALQLDSDLFAQAIHPEEPIVAVGLASGHVQTYRLPPGASDDSDPDEALAAEKGFGHIATTWKTRRHKGSCRTLAFSVDGSSLYSAGTDGIVKVADTTTGRVTAKFAVPLDLANGGIDAPTLVHALSPQSLILGTDSSALHIYDIRDQGAKSAFKPQATHRPHDDYVSSLTPLPPTEASTSGFSKQWVTTGGSTLAVTDLRRGVMVRSEDQEEELLSSVMVTGLSKKGTSVGEKVLVGGGNGVLTLWERGVWDDQDERITIDRSKGGGESLDVIALLPDGVGPGGKIAAVGLGDGSLRFVKLGPNKIIDELKHDELRQEGVIGLGFDVTGRMVSGGGKKLNIWGEKTWQDVPEDDEDEQEEEAPANGKREHESDEDEDSDEDMEESSEDDEPKQKRKKRRKGKGGKQAKGHGILHFSGLA.

5 WD repeats span residues 9–48 (QLDSDLFAQAIHPEEPIVAVGLASGHVQTYRLPPGASDDS), 71–110 (RHKGSCRTLAFSVDGSSLYSAGTDGIVKVADTTTGRVTAK), 117–158 (LANG…AKSA), 219–262 (ELLS…DQDE), and 321–358 (LRQEGVIGLGFDVTGRMVSGGGKKLNIWGEKTWQDVPE). A disordered region spans residues 354 to 425 (QDVPEDDEDE…HGILHFSGLA (72 aa)). 2 stretches are compositionally biased toward acidic residues: residues 356 to 368 (VPEDDEDEQEEEA) and 378 to 396 (SDEDEDSDEDMEESSEDDE). Over residues 399–414 (QKRKKRRKGKGGKQAK) the composition is skewed to basic residues.

It belongs to the WD repeat WDR55 family.

The protein localises to the nucleus. It localises to the nucleolus. In Phaeosphaeria nodorum (strain SN15 / ATCC MYA-4574 / FGSC 10173) (Glume blotch fungus), this protein is WD repeat-containing protein JIP5 (JIP5).